Here is a 98-residue protein sequence, read N- to C-terminus: Biogenesis of lysosome-related organelles complex 1 subunit SNN1 (98 aa).

A coiled-coil region spans residues methionine 55–leucine 98.

It belongs to the SNAPIN family. In terms of assembly, component of the biogenesis of lysosome-related organelles complex-1 (BLOC-1).

It localises to the endosome. In terms of biological role, component of the biogenesis of lysosome-related organelles complex-1 (BLOC-1), a complex involved in endosomal cargo sorting. The protein is Biogenesis of lysosome-related organelles complex 1 subunit SNN1 (SNN1) of Eremothecium gossypii (strain ATCC 10895 / CBS 109.51 / FGSC 9923 / NRRL Y-1056) (Yeast).